The sequence spans 213 residues: NADH dehydrogenase [ubiquinone] iron-sulfur protein 7, mitochondrial (213 aa).

The N-terminal 31 residues, 1–31 (MALIARNAKLLTGTAPFLQRAATIHTTLPSL), are a transit peptide targeting the mitochondrion. Positions 30 to 42 (SLSQQPASSPATS) are enriched in low complexity. The disordered stretch occupies residues 30–52 (SLSQQPASSPATSGGAQPPSMNT). Cysteine 88, cysteine 89, cysteine 153, and cysteine 183 together coordinate [4Fe-4S] cluster.

This sequence belongs to the complex I 20 kDa subunit family. As to quaternary structure, complex I is composed of about 45 different subunits. This is a component of the iron-sulfur (IP) fragment of the enzyme. [4Fe-4S] cluster is required as a cofactor.

Its subcellular location is the mitochondrion. The catalysed reaction is a ubiquinone + NADH + 5 H(+)(in) = a ubiquinol + NAD(+) + 4 H(+)(out). Core subunit of the mitochondrial membrane respiratory chain NADH dehydrogenase (Complex I) that is believed to belong to the minimal assembly required for catalysis. Complex I functions in the transfer of electrons from NADH to the respiratory chain. The immediate electron acceptor for the enzyme is believed to be ubiquinone. The chain is NADH dehydrogenase [ubiquinone] iron-sulfur protein 7, mitochondrial from Solanum tuberosum (Potato).